The chain runs to 207 residues: Outer-membrane lipoprotein LolB (207 aa).

The signal sequence occupies residues 1 to 21 (MPMRKRHFYRLLPLASLLLAA). Cysteine 22 is lipidated: N-palmitoyl cysteine. The S-diacylglycerol cysteine moiety is linked to residue cysteine 22.

It belongs to the LolB family. In terms of assembly, monomer.

It is found in the cell outer membrane. Functionally, plays a critical role in the incorporation of lipoproteins in the outer membrane after they are released by the LolA protein. The sequence is that of Outer-membrane lipoprotein LolB from Yersinia pestis bv. Antiqua (strain Antiqua).